The chain runs to 416 residues: cAMP-dependent protein kinase type II-beta regulatory subunit (416 aa).

The interval 2 to 151 (SIEIPAGLTE…RLQEACKDIL (150 aa)) is dimerization and phosphorylation. The tract at residues 53–97 (HEGRTWGDAGAAAGGGTPSKGVNFAEEPMRSDSENGEEEEAAEAG) is disordered. Threonine 69 carries the post-translational modification Phosphothreonine. Serine 83, serine 85, and serine 112 each carry phosphoserine. 3',5'-cyclic AMP-binding positions include 152 to 273 (LFKN…ESLP), glutamate 221, arginine 230, 274 to 416 (FLKS…EPTA), glutamate 350, and arginine 359.

Belongs to the cAMP-dependent kinase regulatory chain family. The inactive form of the enzyme is composed of two regulatory chains and two catalytic chains. Activation by cAMP produces two active catalytic monomers and a regulatory dimer that binds four cAMP molecules. Interacts with PRKACA and PRKACB. Interacts with the phosphorylated form of PJA2. Forms a complex composed of PRKAR2B, GSK3B and GSKIP through GSKIP interaction; facilitates PKA-induced phosphorylation and regulates GSK3B activity. In terms of processing, phosphorylated by the activated catalytic chain. In terms of tissue distribution, four types of regulatory chains are found: I-alpha, I-beta, II-alpha, and II-beta. Their expression varies among tissues and is in some cases constitutive and in others inducible. Brain. Present in a few pyramidal neurons and mostly in mossy fibers. Colocalizes with PJA2 in dentate granule cells and at postsynaptic sites of primary hippocampal neurons.

It localises to the cytoplasm. The protein localises to the cell membrane. Its function is as follows. Regulatory subunit of the cAMP-dependent protein kinases involved in cAMP signaling in cells. Type II regulatory chains mediate membrane association by binding to anchoring proteins, including the MAP2 kinase. The polypeptide is cAMP-dependent protein kinase type II-beta regulatory subunit (Prkar2b) (Rattus norvegicus (Rat)).